The sequence spans 691 residues: MARDFPLERVRNIGIAAHIDAGKTTTTERILFYSGVVHKIGEVHDGAAVTDWMAQERERGITITAAAISTSWQDHRINIIDTPGHVDFTIEVERSMRVLDGVIAVFCAVGGVQPQSETVWRQADRYSVPRMVFVNKMDRTGADFLKVNQQIKDRLKANAFPIQLPIGAEGDLSGIIDLVSNKAYLYKNDLGTDIEEAPIPDEMKDEALEWRSKLMESVAENDEELIEIFLDKGELTEDQLKKGIREGVLKHGLVPVLCGSAFKNKGVQLVLDAVVDYLPAPIDVKPIQGVLPNGKEDVRPSDDNAPFSALAFKVMSDPYGKLTFVRMYSGVLSKGSYVMNSTKDAKERISRLVILKADEREEVDELRAGDLGAVLGLKNTTTGDTLCNTDDPIVLETLFIPEPVISVAVEPKTKGDMEKLSKALQALSEEDPTFRVSTDQETNQTVIAGMGELHLEILVDRMLREFKVEANIGAPQVSYRETIRSSSKGEGKYARQTGGKGQYGHVVIEMEPAEVGKGFEFVNKIVGGTVPKEYIGPASNGMKETCESGVLAGYPLIDVKVTLVDGSFHDVDSSEMAFKIAGSMAFKDGVKKCNPVLLEPMMKVEVESPDDFLGSVIGDLSSRRGQVEGQSVDDGLSKVQAKVPLAEMFGYATQLRSMTQGRGIFSMEFANYEEVPRNVAEAIISKNQGNS.

Residues 8 to 282 (ERVRNIGIAA…AVVDYLPAPI (275 aa)) form the tr-type G domain. Residues 17–24 (AHIDAGKT), 81–85 (DTPGH), and 135–138 (NKMD) contribute to the GTP site.

It belongs to the TRAFAC class translation factor GTPase superfamily. Classic translation factor GTPase family. EF-G/EF-2 subfamily.

It localises to the cytoplasm. Functionally, catalyzes the GTP-dependent ribosomal translocation step during translation elongation. During this step, the ribosome changes from the pre-translocational (PRE) to the post-translocational (POST) state as the newly formed A-site-bound peptidyl-tRNA and P-site-bound deacylated tRNA move to the P and E sites, respectively. Catalyzes the coordinated movement of the two tRNA molecules, the mRNA and conformational changes in the ribosome. In Prochlorococcus marinus subsp. pastoris (strain CCMP1986 / NIES-2087 / MED4), this protein is Elongation factor G.